Reading from the N-terminus, the 56-residue chain is Ferredoxin (56 aa).

2 consecutive 4Fe-4S ferredoxin-type domains span residues 2–28 and 29–56; these read AYKI…SQGD and SIFV…PVQE. [4Fe-4S] cluster is bound by residues C9, C12, C15, C19, C38, C41, C44, and C48.

[4Fe-4S] cluster is required as a cofactor.

In terms of biological role, ferredoxins are iron-sulfur proteins that transfer electrons in a wide variety of metabolic reactions. The polypeptide is Ferredoxin (Clostridium pasteurianum).